A 142-amino-acid chain; its full sequence is Hemoglobin subunit alpha 1 (142 aa).

Ser-1 is subject to N-acetylserine. The 142-residue stretch at 1–142 (SLSDKDKAAV…VSLALSERYR (142 aa)) folds into the Globin domain. O2 is bound at residue His-59. His-88 serves as a coordination point for heme b.

This sequence belongs to the globin family. Hb1 is a heterotetramer of two alpha-1 chains and two beta-1 chains. Hb2 is a heterotetramer of two alpha-2 chains and two beta-1 chains. HbC is a heterotetramer of two alpha-1 chains and two beta-2 chains. As to expression, red blood cells.

In terms of biological role, involved in oxygen transport from gills to the various peripheral tissues. This Eleginops maclovinus (Patagonian blennie) protein is Hemoglobin subunit alpha 1.